Here is a 194-residue protein sequence, read N- to C-terminus: Peptidyl-tRNA hydrolase (194 aa).

Y17 contributes to the tRNA binding site. The Proton acceptor role is filled by H22. F69, N71, and N117 together coordinate tRNA.

It belongs to the PTH family. As to quaternary structure, monomer.

It localises to the cytoplasm. It catalyses the reaction an N-acyl-L-alpha-aminoacyl-tRNA + H2O = an N-acyl-L-amino acid + a tRNA + H(+). In terms of biological role, hydrolyzes ribosome-free peptidyl-tRNAs (with 1 or more amino acids incorporated), which drop off the ribosome during protein synthesis, or as a result of ribosome stalling. Catalyzes the release of premature peptidyl moieties from peptidyl-tRNA molecules trapped in stalled 50S ribosomal subunits, and thus maintains levels of free tRNAs and 50S ribosomes. The polypeptide is Peptidyl-tRNA hydrolase (Renibacterium salmoninarum (strain ATCC 33209 / DSM 20767 / JCM 11484 / NBRC 15589 / NCIMB 2235)).